We begin with the raw amino-acid sequence, 887 residues long: MAQDSLLSKGYEFADVEEKWLSRWHKQNAFATKMEDGKDAFSIVIPPPNVTGVLHVGHALNNTLQDILVRYHRMCGDNTMWIPGTDHAGIATQNVVERQLATEGKGRHDLGREAFIERVWKWREDKGGTIVNQLKKIGSSCDWERERFTMDEGLSTSVREVFVRLYKEGLIYKGDYIVNWCPRCQTALADDEVEHEDSKGKLYHIRYPFADGSGSVVIATTRPETMPGDTAIAVHPDDERYAHLGEIGIKLPLTDRILPVVFDHHVEKDFGTGALKVTPSHDRNDYEIGIRHGLDLCKVIDEKGMMNDNAGKYAGLDRFECRKQIVEDLREQGYLVEIEDYDHAVGHCYRCKTVIEPTTSLQWFVSVKPLAAKAVDAVRDGQINIYPKTWYNTFYSWMDNIRDWCISRQIWWGHRIPAWSCADCGELIVETEDPTSCPKCGSSKLSQETDVLDTWFSSALWPFSTMGWPENTKELQTFYPTSVLITSFDILFFWVARMMMMGLHLMDEVPFKDVYLHALVRDKHGKKMSKSTGNVIDPLEIMAQYGTDSMRFTLTAFAAQGREIKLDEDRIEGYRHFINKIWNAARFAQMHIGDCDDSIRVAVETPKDLALGHRWILSRTAKLVEGIHRSLRGYLFNEVASLNYQFIWKEFCDWYLEWIKSDLFSDDLVARDQARGCLMVVLETILKTLHPITPFVTEEIWSVLPGERGFLATSAFPEVREEWKDEEAEAEMELLMGIITGIRNIRSEAEVHPSTKINATVICHDSKRADIIRSYTSGISDMTRLEGFTVVAEAEKPADAATYIYNDIEIFVPLAGLVDIEAELEKLSRERKKVEAKLKQINGKLGNAKFLAGAPEAVVAKVTGEKEELDAKLAKIDEASDRLKKLS.

A 'HIGH' region motif is present at residues 48–58; the sequence is PNVTGVLHVGH. Positions 527 to 531 match the 'KMSKS' region motif; sequence KMSKS. K530 contributes to the ATP binding site. Positions 814–887 form a coiled coil; the sequence is LAGLVDIEAE…EASDRLKKLS (74 aa).

Belongs to the class-I aminoacyl-tRNA synthetase family. ValS type 1 subfamily. As to quaternary structure, monomer.

The protein localises to the cytoplasm. The enzyme catalyses tRNA(Val) + L-valine + ATP = L-valyl-tRNA(Val) + AMP + diphosphate. In terms of biological role, catalyzes the attachment of valine to tRNA(Val). As ValRS can inadvertently accommodate and process structurally similar amino acids such as threonine, to avoid such errors, it has a 'posttransfer' editing activity that hydrolyzes mischarged Thr-tRNA(Val) in a tRNA-dependent manner. In Desulfotalea psychrophila (strain LSv54 / DSM 12343), this protein is Valine--tRNA ligase.